The chain runs to 199 residues: uncharacterized protein (199 aa).

It to M.jannaschii MJ1356.

This is an uncharacterized protein from Methanocaldococcus jannaschii (strain ATCC 43067 / DSM 2661 / JAL-1 / JCM 10045 / NBRC 100440) (Methanococcus jannaschii).